The primary structure comprises 1005 residues: Translocated actin-recruiting phosphoprotein (1005 aa).

The segment covering 1–10 (MTNSISGDQP) has biased composition (polar residues). Disordered regions lie at residues 1–36 (MTNS…SVST), 74–128 (PTVT…DYEP), 191–214 (SIDD…NSLR), 343–365 (SIDD…LNSL), 611–645 (WGTQ…TPSS), 661–748 (NIRD…DGPA), and 792–847 (TGTS…TSLM). Low complexity-rich tracts occupy residues 11–36 (TVTT…SVST) and 74–121 (PTVT…SSDH). 2 stretches are compositionally biased toward polar residues: residues 191 to 205 (SIDD…NTSG) and 343 to 357 (SIDD…NTSG). Composition is skewed to low complexity over residues 661–700 (NIRD…TDDI), 715–734 (GDIS…VSSS), and 831–846 (STTT…TTSL).

Belongs to the chlamydial CPn_0572/CT_456/TC_0741 family. Phosphorylated on a tyrosine on attachment to the host cell. Tyrosine phosphorylation is temporally and spatially associated with recruitment of actin to the site of chlamydial entry. Phosphorylated Tarp seems to remain cytoplasmically exposed on the inclusion membrane at one side of internalized elementary bodies for several hours after entry.

It localises to the secreted. In terms of biological role, appears to initiate or participate in signaling events that regulate the actin recruitment, which ultimately leads to internalization. The chain is Translocated actin-recruiting phosphoprotein (tarP) from Chlamydia trachomatis serovar L2 (strain ATCC VR-902B / DSM 19102 / 434/Bu).